The primary structure comprises 374 residues: 8-amino-7-oxononanoate synthase (374 aa).

Residues arginine 22 and arginine 29 each coordinate substrate. A pyridoxal 5'-phosphate-binding site is contributed by 109–110 (GY). Histidine 134 serves as a coordination point for substrate. Pyridoxal 5'-phosphate is bound by residues serine 182, 207–210 (DDAH), and 227–230 (TLSK). The residue at position 230 (lysine 230) is an N6-(pyridoxal phosphate)lysine. Threonine 339 is a substrate binding site.

This sequence belongs to the class-II pyridoxal-phosphate-dependent aminotransferase family. BioF subfamily. Homodimer. Pyridoxal 5'-phosphate serves as cofactor.

It carries out the reaction 6-carboxyhexanoyl-[ACP] + L-alanine + H(+) = (8S)-8-amino-7-oxononanoate + holo-[ACP] + CO2. It functions in the pathway cofactor biosynthesis; biotin biosynthesis. Its function is as follows. Catalyzes the decarboxylative condensation of pimeloyl-[acyl-carrier protein] and L-alanine to produce 8-amino-7-oxononanoate (AON), [acyl-carrier protein], and carbon dioxide. This chain is 8-amino-7-oxononanoate synthase, found in Methylobacterium radiotolerans (strain ATCC 27329 / DSM 1819 / JCM 2831 / NBRC 15690 / NCIMB 10815 / 0-1).